The primary structure comprises 134 residues: Major pollen allergen Lol p 11 (134 aa).

3 disulfide bridges follow: Cys-14/Cys-85, Cys-17/Cys-127, and Cys-38/Cys-73. The N-linked (GlcNAc...) asparagine glycan is linked to Asn-24.

This sequence belongs to the Ole e I family.

It is found in the secreted. This chain is Major pollen allergen Lol p 11, found in Lolium perenne (Perennial ryegrass).